A 95-amino-acid polypeptide reads, in one-letter code: Aspartyl/glutamyl-tRNA(Asn/Gln) amidotransferase subunit C (95 aa).

This sequence belongs to the GatC family. As to quaternary structure, heterotrimer of A, B and C subunits.

The enzyme catalyses L-glutamyl-tRNA(Gln) + L-glutamine + ATP + H2O = L-glutaminyl-tRNA(Gln) + L-glutamate + ADP + phosphate + H(+). It carries out the reaction L-aspartyl-tRNA(Asn) + L-glutamine + ATP + H2O = L-asparaginyl-tRNA(Asn) + L-glutamate + ADP + phosphate + 2 H(+). Its function is as follows. Allows the formation of correctly charged Asn-tRNA(Asn) or Gln-tRNA(Gln) through the transamidation of misacylated Asp-tRNA(Asn) or Glu-tRNA(Gln) in organisms which lack either or both of asparaginyl-tRNA or glutaminyl-tRNA synthetases. The reaction takes place in the presence of glutamine and ATP through an activated phospho-Asp-tRNA(Asn) or phospho-Glu-tRNA(Gln). This is Aspartyl/glutamyl-tRNA(Asn/Gln) amidotransferase subunit C from Prosthecochloris aestuarii (strain DSM 271 / SK 413).